Here is a 198-residue protein sequence, read N- to C-terminus: Transcriptional regulator GfcR (198 aa).

This sequence belongs to the purine/pyrimidine phosphoribosyltransferase family. GfcR subfamily.

The polypeptide is Transcriptional regulator GfcR (Methanocorpusculum labreanum (strain ATCC 43576 / DSM 4855 / Z)).